The primary structure comprises 212 residues: ER lumen protein-retaining receptor 2 (212 aa).

Residues 1–4 (MNIF) lie on the Lumenal side of the membrane. The chain crosses the membrane as a helical span at residues 5–24 (RLTGDLSHLAAIIILLLKIW). The Cytoplasmic segment spans residues 25–32 (KSRSCAGI). A helical membrane pass occupies residues 33 to 52 (SGKSQILFALVFTTRYLDLL). Residues 47–48 (RY) form an interaction with the K-D-E-L motif on target proteins region. Over 53–58 (TSFISL) the chain is Lumenal. A helical transmembrane segment spans residues 59 to 79 (YNTCMKVIYIGCAYATVYLIY). Residues 80–92 (AKFRATYDGNHDT) lie on the Cytoplasmic side of the membrane. The chain crosses the membrane as a helical span at residues 93–110 (FRAEFLVVPVGGLAFLVN). Topologically, residues 111 to 116 (HDFSPL) are lumenal. Residues 117-135 (EILWTFSIYLESVAILPQL) traverse the membrane as a helical segment. The Cytoplasmic segment spans residues 136-149 (FMISKTGEAETITT). A helical transmembrane segment spans residues 150–168 (HYLFCLGVYRALYLFNWIW). The interaction with the K-D-E-L motif on target proteins stretch occupies residues 159–169 (RALYLFNWIWR). At 169–178 (RFYFEGFFDM) the chain is on the lumenal side. The chain crosses the membrane as a helical span at residues 179-199 (IAIVAGVVQTILYCDFFYLYV). The Cytoplasmic segment spans residues 200 to 212 (TKVLKGKKLSLPA). An important for recycling of cargo proteins with the sequence motif K-D-E-L from the Golgi to the endoplasmic reticulum region spans residues 204–207 (KGKK).

This sequence belongs to the ERD2 family.

It is found in the endoplasmic reticulum membrane. The protein localises to the golgi apparatus membrane. It localises to the cytoplasmic vesicle. Its subcellular location is the COPI-coated vesicle membrane. In terms of biological role, receptor for the C-terminal sequence motif K-D-E-L that is present on endoplasmic reticulum resident proteins and that mediates their recycling from the Golgi back to the endoplasmic reticulum. Binding is pH dependent, and is optimal at pH 5-5.4. This is ER lumen protein-retaining receptor 2 (kdelr2) from Danio rerio (Zebrafish).